The chain runs to 98 residues: C-C motif chemokine 19 (98 aa).

Residues 1–21 (MALLLALSLLVLWTSPAPTLS) form the signal peptide. 2 disulfide bridges follow: C29–C55 and C30–C71.

Belongs to the intercrine beta (chemokine CC) family. As to quaternary structure, interacts with TNFAIP6 (via Link domain). As to expression, expressed at high levels in the lymph nodes, thymus and appendix. Intermediate levels seen in colon and trachea, while low levels found in spleen, small intestine, lung, kidney and stomach.

The protein localises to the secreted. May play a role not only in inflammatory and immunological responses but also in normal lymphocyte recirculation and homing. May play an important role in trafficking of T-cells in thymus, and T-cell and B-cell migration to secondary lymphoid organs. Binds to chemokine receptor CCR7. Recombinant CCL19 shows potent chemotactic activity for T-cells and B-cells but not for granulocytes and monocytes. Binds to atypical chemokine receptor ACKR4 and mediates the recruitment of beta-arrestin (ARRB1/2) to ACKR4. This chain is C-C motif chemokine 19 (CCL19), found in Homo sapiens (Human).